The following is a 585-amino-acid chain: Proline--tRNA ligase (585 aa).

Belongs to the class-II aminoacyl-tRNA synthetase family. ProS type 1 subfamily. In terms of assembly, homodimer.

It is found in the cytoplasm. It carries out the reaction tRNA(Pro) + L-proline + ATP = L-prolyl-tRNA(Pro) + AMP + diphosphate. Functionally, catalyzes the attachment of proline to tRNA(Pro) in a two-step reaction: proline is first activated by ATP to form Pro-AMP and then transferred to the acceptor end of tRNA(Pro). As ProRS can inadvertently accommodate and process non-cognate amino acids such as alanine and cysteine, to avoid such errors it has two additional distinct editing activities against alanine. One activity is designated as 'pretransfer' editing and involves the tRNA(Pro)-independent hydrolysis of activated Ala-AMP. The other activity is designated 'posttransfer' editing and involves deacylation of mischarged Ala-tRNA(Pro). The misacylated Cys-tRNA(Pro) is not edited by ProRS. This is Proline--tRNA ligase from Mycolicibacterium vanbaalenii (strain DSM 7251 / JCM 13017 / BCRC 16820 / KCTC 9966 / NRRL B-24157 / PYR-1) (Mycobacterium vanbaalenii).